A 256-amino-acid polypeptide reads, in one-letter code: Pimeloyl-[acyl-carrier protein] methyl ester esterase (256 aa).

In terms of domain architecture, AB hydrolase-1 spans H15–P242. Substrate contacts are provided by residues W22, S82 to L83, and F143 to Q147. S82 acts as the Nucleophile in catalysis. Residues D207 and H235 contribute to the active site. H235 is a substrate binding site.

It belongs to the AB hydrolase superfamily. Carboxylesterase BioH family. As to quaternary structure, monomer.

The protein localises to the cytoplasm. The enzyme catalyses 6-carboxyhexanoyl-[ACP] methyl ester + H2O = 6-carboxyhexanoyl-[ACP] + methanol + H(+). It participates in cofactor biosynthesis; biotin biosynthesis. In terms of biological role, the physiological role of BioH is to remove the methyl group introduced by BioC when the pimeloyl moiety is complete. It allows to synthesize pimeloyl-ACP via the fatty acid synthetic pathway through the hydrolysis of the ester bonds of pimeloyl-ACP esters. The sequence is that of Pimeloyl-[acyl-carrier protein] methyl ester esterase from Escherichia coli O139:H28 (strain E24377A / ETEC).